The sequence spans 592 residues: Transmembrane 9 superfamily member 2 (592 aa).

The first 24 residues, 1–24 (MRTPTTILLLVGAILFSGAGYVRS), serve as a signal peptide directing secretion. Residues 25 to 229 (DASDHRYKEG…SLPHHLEIHW (205 aa)) are Lumenal-facing. Residues 230 to 250 (FSIINSCVTVLLLTGFLATIL) traverse the membrane as a helical segment. Over 251–302 (MRVLKNDFMKYAQDEEAADDQEETGWKYIHGDVFRFPTHNSLFAASLGSGTQ) the chain is Cytoplasmic. Residues 303–323 (LFTLTIFIFMLALVGVFYPYN) traverse the membrane as a helical segment. A topological domain (lumenal) is located at residue arginine 324. Residues 325 to 345 (GALFTALVVIYALTSGIAGYT) form a helical membrane-spanning segment. At 346–362 (SASFYCQLEGKSWVRNL) the chain is on the cytoplasmic side. A helical membrane pass occupies residues 363-383 (LLTGCLFCGPLFLTFCFLNTV). Residues 384–397 (AITYTATAALPFGT) are Lumenal-facing. Residues 398–418 (IVVIVLIWTLVTSPLLVLGGI) traverse the membrane as a helical segment. Over 419–452 (AGKNSKAEFQAPCRTTKYPREIPPLPWYRSAIPQ) the chain is Cytoplasmic. The helical transmembrane segment at 453 to 473 (MAMAGFLPFSAIYIELYYIFA) threads the bilayer. Residues 474 to 485 (SVWGHRIYTIYS) are Lumenal-facing. The helical transmembrane segment at 486 to 506 (ILFIVFIILIIVTAFITVALT) threads the bilayer. Topologically, residues 507-521 (YFQLAAEDHQWWWRS) are cytoplasmic. A helical transmembrane segment spans residues 522-542 (FLCGGSTGLFIYAYCLYYYYA). The Lumenal portion of the chain corresponds to 543-553 (RSDMSGFMQTS). The helical transmembrane segment at 554–574 (FFFGYMACICYGFFLMLGTVG) threads the bilayer. Topologically, residues 575-592 (FRAALLFVRHIYRSIKCE) are cytoplasmic. The short motif at 581–586 (FVRHIY) is the Endoplasmic reticulum export signal element. A Golgi retention signal motif is present at residues 590–592 (KCE).

It belongs to the nonaspanin (TM9SF) (TC 9.A.2) family.

The protein localises to the endosome membrane. It localises to the golgi apparatus membrane. The sequence is that of Transmembrane 9 superfamily member 2 from Arabidopsis thaliana (Mouse-ear cress).